A 350-amino-acid chain; its full sequence is Glucose-6-phosphate 3-dehydrogenase (350 aa).

This sequence belongs to the Gfo/Idh/MocA family.

It catalyses the reaction D-glucose 6-phosphate + NAD(+) = 3-dehydro-D-glucose 6-phosphate + NADH + H(+). It functions in the pathway antibiotic biosynthesis; kanosamine biosynthesis. Involved in the biosynthesis of kanosamine (3-amino-3-deoxy-D-glucose), which is known to have antibiotic and antifungal properties, and to be a precursor of the antibiotic neotrehalosadiamine (3,3'-diamino-3,3'-dideoxy-alpha,beta-trehalose (NTD)). Catalyzes the oxidation of glucose 6-phosphate to 3-oxo-D-glucose 6-phosphate. It can only use NAD. This chain is Glucose-6-phosphate 3-dehydrogenase (ntdC), found in Bacillus subtilis (strain 168).